The chain runs to 144 residues: MRLMGLDVGSRTVGVAVSDPLGWTAQGLEIIRINEDKEQFGIARLKELVKQYEVTAFVLGLPKNMNNSIGPRAEKSQAYGELLKTTFGLPVDFIDERLTTVEASRMLIEEADASRKRQKQVIDKLAAQMILQNYLDAKGPLTKQ.

It belongs to the YqgF nuclease family.

It is found in the cytoplasm. In terms of biological role, could be a nuclease involved in processing of the 5'-end of pre-16S rRNA. In Lacticaseibacillus casei (strain BL23) (Lactobacillus casei), this protein is Putative pre-16S rRNA nuclease.